Consider the following 538-residue polypeptide: Aldehyde dehydrogenase family 2 member B4, mitochondrial (538 aa).

The N-terminal 38 residues, 1–38 (MAARRVSSLLSRSFSASSPLLFRSQGRNCYNGGILRRF), are a transit peptide targeting the mitochondrion. An NAD(+)-binding site is contributed by 282–287 (GSTDTG). Glu-305 (proton acceptor) is an active-site residue. Cys-339 (nucleophile) is an active-site residue.

This sequence belongs to the aldehyde dehydrogenase family. Homotetramer.

The protein resides in the mitochondrion matrix. It catalyses the reaction an aldehyde + NAD(+) + H2O = a carboxylate + NADH + 2 H(+). Its function is as follows. Possesses activity on acetaldehyde and glycolaldehyde in vitro. The chain is Aldehyde dehydrogenase family 2 member B4, mitochondrial (ALDH2B4) from Arabidopsis thaliana (Mouse-ear cress).